A 366-amino-acid polypeptide reads, in one-letter code: Aminomethyltransferase (366 aa).

The protein belongs to the GcvT family. As to quaternary structure, the glycine cleavage system is composed of four proteins: P, T, L and H.

The enzyme catalyses N(6)-[(R)-S(8)-aminomethyldihydrolipoyl]-L-lysyl-[protein] + (6S)-5,6,7,8-tetrahydrofolate = N(6)-[(R)-dihydrolipoyl]-L-lysyl-[protein] + (6R)-5,10-methylene-5,6,7,8-tetrahydrofolate + NH4(+). Its function is as follows. The glycine cleavage system catalyzes the degradation of glycine. This chain is Aminomethyltransferase, found in Bacillus velezensis (strain DSM 23117 / BGSC 10A6 / LMG 26770 / FZB42) (Bacillus amyloliquefaciens subsp. plantarum).